A 68-amino-acid polypeptide reads, in one-letter code: Palustrin-1c (68 aa).

The first 22 residues, 1–22 (MFTTKKSLLLLFFLGTISLSLC), serve as a signal peptide directing secretion. Residues 23–39 (EEERGADEEEGDGEKLT) constitute a propeptide that is removed on maturation. Cys-62 and Cys-68 are disulfide-bonded.

Expressed by the skin glands.

The protein resides in the secreted. Antimicrobial activity against Gram-negative bacterium E.coli. Stimulates insulin release. This is Palustrin-1c from Lithobates palustris (Pickerel frog).